The sequence spans 259 residues: 5'-nucleotidase SurE (259 aa).

A divalent metal cation-binding residues include Asp-8, Asp-9, Ser-41, and Asn-93.

It belongs to the SurE nucleotidase family. A divalent metal cation is required as a cofactor.

The protein resides in the cytoplasm. The catalysed reaction is a ribonucleoside 5'-phosphate + H2O = a ribonucleoside + phosphate. Its function is as follows. Nucleotidase that shows phosphatase activity on nucleoside 5'-monophosphates. The polypeptide is 5'-nucleotidase SurE (Verminephrobacter eiseniae (strain EF01-2)).